Here is a 217-residue protein sequence, read N- to C-terminus: Growth hormone variant (217 aa).

The first 26 residues, Met-1 to Ala-26, serve as a signal peptide directing secretion. 2 cysteine pairs are disulfide-bonded: Cys-79–Cys-191 and Cys-208–Cys-215. Ser-132 bears the Phosphoserine mark. Asn-166 is a glycosylation site (N-linked (GlcNAc...) asparagine). Phosphoserine is present on Ser-176.

It belongs to the somatotropin/prolactin family. Monomer, dimer, trimer, tetramer and pentamer, disulfide-linked or non-covalently associated, in homomeric and heteromeric combinations. Can also form a complex either with GHBP or with the alpha2-macroglobulin complex. As to expression, expressed in the placenta.

The protein localises to the secreted. In terms of biological role, plays an important role in growth control. Its major role in stimulating body growth is to stimulate the liver and other tissues to secrete IGF1. It stimulates both the differentiation and proliferation of myoblasts. It also stimulates amino acid uptake and protein synthesis in muscle and other tissues. The sequence is that of Growth hormone variant (GH2) from Homo sapiens (Human).